Consider the following 51-residue polypeptide: UPF0337 protein NE0131 (51 aa).

This sequence belongs to the UPF0337 (CsbD) family.

In Nitrosomonas europaea (strain ATCC 19718 / CIP 103999 / KCTC 2705 / NBRC 14298), this protein is UPF0337 protein NE0131.